The sequence spans 713 residues: B3 domain-containing transcription factor VAL3 (713 aa).

Positions 328–427 (FEKILSATDT…KLILGFRKAS (100 aa)) form a DNA-binding region, TF-B3. Disordered stretches follow at residues 459–478 (VECS…SKRQ) and 616–713 (LNSD…TSSM). Positions 464 to 477 (GKKKSSMMITRSKR) are enriched in basic residues. The segment covering 616–629 (LNSDNGLHQSANNS) has biased composition (polar residues). Residues 663 to 674 (TKSETLPHDDTV) show a composition bias toward basic and acidic residues. Positions 676-688 (SSFTSPSSSSAHS) are enriched in low complexity. The segment covering 690–700 (NNKEDEGKLKT) has biased composition (basic and acidic residues). Residues 701–713 (TTEIADTTTTSSM) are compositionally biased toward low complexity.

It localises to the nucleus. In terms of biological role, may be involved in plant development. The protein is B3 domain-containing transcription factor VAL3 (VAL3) of Arabidopsis thaliana (Mouse-ear cress).